We begin with the raw amino-acid sequence, 798 residues long: Elongation factor G, mitochondrial (798 aa).

Residues 1 to 24 (MRVIRAAAALNSSCAASSRQGARY) constitute a mitochondrion transit peptide. Residues 97–383 (SMVRNIGIAA…AVCDYLPNPG (287 aa)) enclose the tr-type G domain. GTP contacts are provided by residues 106-113 (AHIDSGKT), 181-185 (DTPGH), and 235-238 (NKMD).

Belongs to the TRAFAC class translation factor GTPase superfamily. Classic translation factor GTPase family. EF-G/EF-2 subfamily.

It is found in the mitochondrion. It functions in the pathway protein biosynthesis; polypeptide chain elongation. In terms of biological role, mitochondrial GTPase that catalyzes the GTP-dependent ribosomal translocation step during translation elongation. During this step, the ribosome changes from the pre-translocational (PRE) to the post-translocational (POST) state as the newly formed A-site-bound peptidyl-tRNA and P-site-bound deacylated tRNA move to the P and E sites, respectively. Catalyzes the coordinated movement of the two tRNA molecules, the mRNA and conformational changes in the ribosome. The chain is Elongation factor G, mitochondrial from Chaetomium globosum (strain ATCC 6205 / CBS 148.51 / DSM 1962 / NBRC 6347 / NRRL 1970) (Soil fungus).